Here is a 481-residue protein sequence, read N- to C-terminus: Beta-1,3-glucan-binding protein (481 aa).

The signal sequence occupies residues 1–17; that stretch reads MKVLVVFIFCLVRSTFG. Positions 19–123 constitute a CBM39 domain; the sequence is FEVPDALVEV…QKFVVKQLLD (105 aa). Residues 211 to 481 form the GH16 domain; the sequence is HRLTIRPVPS…EVDYVKVSAL (271 aa). Asparagine 467 carries an N-linked (GlcNAc...) asparagine glycan.

It belongs to the insect beta-1,3-glucan binding protein family. In terms of processing, the N-terminus is blocked. As to expression, hemolymph.

It localises to the secreted. Involved in the recognition of invading microorganisms. Binds specifically to beta-1,3-glucan and activates the phenoloxidase cascade. This chain is Beta-1,3-glucan-binding protein (GRP), found in Tenebrio molitor (Yellow mealworm beetle).